We begin with the raw amino-acid sequence, 409 residues long: Peptidase T (409 aa).

H78 provides a ligand contact to Zn(2+). The active site involves D80. Residue D140 coordinates Zn(2+). E173 serves as the catalytic Proton acceptor. The Zn(2+) site is built by E174, D196, and H379.

Belongs to the peptidase M20B family. Zn(2+) serves as cofactor.

It localises to the cytoplasm. The enzyme catalyses Release of the N-terminal residue from a tripeptide.. Cleaves the N-terminal amino acid of tripeptides. This is Peptidase T from Salmonella paratyphi A (strain ATCC 9150 / SARB42).